The chain runs to 843 residues: Protein P (843 aa).

A terminal protein domain (TP) region spans residues 1–177; that stretch reads MPLSYQHFRK…FCGSPYSWEQ (177 aa). The segment at 178-346 is spacer; that stretch reads ELQHGRLVFQ…YCLSHIVNLL (169 aa). A polymerase/reverse transcriptase domain (RT) region spans residues 347-690; that stretch reads EDWGPCTEHG…YMNLYPVARQ (344 aa). One can recognise a Reverse transcriptase domain in the interval 357–600; it reads EHHIRIPRTP…YSLNFMGYVI (244 aa). Positions 429, 551, and 552 each coordinate Mg(2+).

This sequence belongs to the hepadnaviridae P protein family.

The catalysed reaction is DNA(n) + a 2'-deoxyribonucleoside 5'-triphosphate = DNA(n+1) + diphosphate. It carries out the reaction Endonucleolytic cleavage to 5'-phosphomonoester.. With respect to regulation, activated by host HSP70 and HSP40 in vitro to be able to bind the epsilon loop of the pgRNA. Because deletion of the RNase H region renders the protein partly chaperone-independent, the chaperones may be needed indirectly to relieve occlusion of the RNA-binding site by this domain. Inhibited by several reverse-transcriptase inhibitors: Lamivudine, Adefovir and Entecavir. Its function is as follows. Multifunctional enzyme that converts the viral RNA genome into dsDNA in viral cytoplasmic capsids. This enzyme displays a DNA polymerase activity that can copy either DNA or RNA templates, and a ribonuclease H (RNase H) activity that cleaves the RNA strand of RNA-DNA heteroduplexes in a partially processive 3'- to 5'-endonucleasic mode. Neo-synthesized pregenomic RNA (pgRNA) are encapsidated together with the P protein, and reverse-transcribed inside the nucleocapsid. Initiation of reverse-transcription occurs first by binding the epsilon loop on the pgRNA genome, and is initiated by protein priming, thereby the 5'-end of (-)DNA is covalently linked to P protein. Partial (+)DNA is synthesized from the (-)DNA template and generates the relaxed circular DNA (RC-DNA) genome. After budding and infection, the RC-DNA migrates in the nucleus, and is converted into a plasmid-like covalently closed circular DNA (cccDNA). The activity of P protein does not seem to be necessary for cccDNA generation, and is presumably released from (+)DNA by host nuclear DNA repair machinery. The polypeptide is Protein P (Homo sapiens (Human)).